Consider the following 281-residue polypeptide: 1-acyl-sn-glycerol-3-phosphate acyltransferase (281 aa).

The next 3 membrane-spanning stretches (helical) occupy residues 40-60, 71-91, and 110-130; these read IFVCFAIVLITAVAWGLIMVL, LGNLYGHIIGGLVIWLYGIPI, and ASPIDAFFVMWLAPIGTVGVA. The HXXXXD motif signature appears at 109 to 114; it reads HASPID.

The protein belongs to the 1-acyl-sn-glycerol-3-phosphate acyltransferase family.

Its subcellular location is the membrane. It carries out the reaction a 1-acyl-sn-glycero-3-phosphate + an acyl-CoA = a 1,2-diacyl-sn-glycero-3-phosphate + CoA. The protein operates within phospholipid metabolism; CDP-diacylglycerol biosynthesis; CDP-diacylglycerol from sn-glycerol 3-phosphate: step 2/3. In terms of biological role, converts lysophosphatidic acid (LPA) into phosphatidic acid by incorporating acyl moiety at the 2 position. This enzyme uses erucoyl-CoA as an acyl donor. This is 1-acyl-sn-glycerol-3-phosphate acyltransferase from Limnanthes alba (White meadowfoam).